The primary structure comprises 276 residues: Aurora kinase C (276 aa).

The 251-residue stretch at Phe-16–Val-266 folds into the Protein kinase domain. Residues Leu-22 to Val-30 and Lys-45 each bind ATP. Asp-139 (proton acceptor) is an active-site residue. At Thr-171 the chain carries Phosphothreonine; by PKA.

The protein belongs to the protein kinase superfamily. Ser/Thr protein kinase family. Aurora subfamily. As to quaternary structure, component of the chromosomal passenger complex (CPC) composed of at least BIRC5/survivin, CDCA8/borealin, INCENP, AURKB or AURKC; predominantly independent AURKB- and AURKC-containing complexes exist; in the complex interacts directly with BIRC5/survivin and INCENP. Interacts with TACC1. Expressed only in testis.

It is found in the nucleus. The protein resides in the chromosome. It localises to the centromere. The protein localises to the cytoplasm. Its subcellular location is the cytoskeleton. It is found in the spindle. The catalysed reaction is L-seryl-[protein] + ATP = O-phospho-L-seryl-[protein] + ADP + H(+). It catalyses the reaction L-threonyl-[protein] + ATP = O-phospho-L-threonyl-[protein] + ADP + H(+). Okadaic acid, an inhibitor of protein phosphatase 1 (PP1), protein phosphatase 2A (PP2A) and protein phosphatase 5 (PP5), increases AURKC activity. AURKC is also stabilized through its interaction with INCENP, which also acts as an activator. Serine/threonine-protein kinase component of the chromosomal passenger complex (CPC), a complex that acts as a key regulator of mitosis. The CPC complex has essential functions at the centromere in ensuring correct chromosome alignment and segregation and is required for chromatin-induced microtubule stabilization and spindle assembly. Also plays a role in meiosis and more particularly in spermatogenesis. Has redundant cellular functions with AURKB and can rescue an AURKB knockdown. Like AURKB, AURKC phosphorylates histone H3 at 'Ser-10' and 'Ser-28'. AURKC phosphorylates the CPC complex subunits BIRC5/survivin and INCENP leading to increased AURKC activity. Phosphorylates TACC1, another protein involved in cell division, at 'Ser-228'. This Mus musculus (Mouse) protein is Aurora kinase C (Aurkc).